A 200-amino-acid polypeptide reads, in one-letter code: GTP-binding protein rho5 (200 aa).

13–20 (GDGACGKT) lines the GTP pocket. The Effector region motif lies at 35 to 43 (YVPTVFENY). GTP-binding positions include 60–64 (DTAGQ) and 118–121 (CKVD). Residue Cys197 is modified to Cysteine methyl ester. Residue Cys197 is the site of S-geranylgeranyl cysteine attachment. A propeptide spans 198-200 (ILL) (removed in mature form).

This sequence belongs to the small GTPase superfamily. Rho family.

It localises to the cell membrane. This chain is GTP-binding protein rho5 (rho5), found in Schizosaccharomyces pombe (strain 972 / ATCC 24843) (Fission yeast).